We begin with the raw amino-acid sequence, 163 residues long: MASITQAAKSLLLKEFASAFALSMRQFFAPKATLNYPHEKGPVSPRFRGEHALRRYPNGEERCIACKLCEAICPAQAITIEAGPRRNDGTRRTVRYDIDMVKCIYCGFCQEACPVDAIVEGPNFEFATETREELYYDKDKLLANGDRWELEIARNIAMDAPYR.

2 4Fe-4S ferredoxin-type domains span residues Leu-53–Gly-83 and Val-94–Asn-123. 8 residues coordinate [4Fe-4S] cluster: Cys-63, Cys-66, Cys-69, Cys-73, Cys-103, Cys-106, Cys-109, and Cys-113.

It belongs to the complex I 23 kDa subunit family. As to quaternary structure, NDH-1 is composed of 14 different subunits. Subunits NuoA, H, J, K, L, M, N constitute the membrane sector of the complex. [4Fe-4S] cluster is required as a cofactor.

The protein localises to the cell inner membrane. It carries out the reaction a quinone + NADH + 5 H(+)(in) = a quinol + NAD(+) + 4 H(+)(out). In terms of biological role, NDH-1 shuttles electrons from NADH, via FMN and iron-sulfur (Fe-S) centers, to quinones in the respiratory chain. The immediate electron acceptor for the enzyme in this species is believed to be ubiquinone. Couples the redox reaction to proton translocation (for every two electrons transferred, four hydrogen ions are translocated across the cytoplasmic membrane), and thus conserves the redox energy in a proton gradient. This Brucella suis (strain ATCC 23445 / NCTC 10510) protein is NADH-quinone oxidoreductase subunit I.